A 339-amino-acid polypeptide reads, in one-letter code: Anthranilate phosphoribosyltransferase (339 aa).

5-phospho-alpha-D-ribose 1-diphosphate-binding positions include glycine 79, 82-83 (GD), threonine 87, 89-92 (NIST), 107-115 (KHGNRAVSS), and serine 119. Residue glycine 79 coordinates anthranilate. Residue serine 91 coordinates Mg(2+). Residue asparagine 110 coordinates anthranilate. Arginine 165 serves as a coordination point for anthranilate. Mg(2+) is bound by residues aspartate 224 and glutamate 225.

The protein belongs to the anthranilate phosphoribosyltransferase family. In terms of assembly, homodimer. Mg(2+) serves as cofactor.

The enzyme catalyses N-(5-phospho-beta-D-ribosyl)anthranilate + diphosphate = 5-phospho-alpha-D-ribose 1-diphosphate + anthranilate. The protein operates within amino-acid biosynthesis; L-tryptophan biosynthesis; L-tryptophan from chorismate: step 2/5. Catalyzes the transfer of the phosphoribosyl group of 5-phosphorylribose-1-pyrophosphate (PRPP) to anthranilate to yield N-(5'-phosphoribosyl)-anthranilate (PRA). The sequence is that of Anthranilate phosphoribosyltransferase from Geobacillus sp. (strain WCH70).